The sequence spans 479 residues: FAD-dependent monooxygenase cdmI (479 aa).

FAD is bound by residues Glu-43, Gly-57, and Arg-116. Residues Asn-156 and Asn-198 are each glycosylated (N-linked (GlcNAc...) asparagine). 2 residues coordinate FAD: Asp-315 and Ala-328. The chain crosses the membrane as a helical span at residues 453–473 (PFILAVLAGLGFLLTMFKQQW).

This sequence belongs to the paxM FAD-dependent monooxygenase family. FAD is required as a cofactor.

The protein localises to the membrane. It catalyses the reaction verruculide C + AH2 + O2 = verruculide C epoxide + A + H2O. Its pathway is secondary metabolite biosynthesis; terpenoid biosynthesis. Functionally, FAD-dependent monooxygenase; part of the gene cluster that mediates the biosynthesis of chrodrimanin B, a meroterpenoid that acts as a potent blocker of insect GABA-gated chloride channels. The first step of the pathway is the biosynthesis of 6-hydroxymellein by the polyketide synthase cdmE. The prenyltransferase cdmH acts as a 6-hydroxymellein 5-farnesyltransferase and produces the hydrophobic metabolite verruculide C. The FAD-dependent monooxygenase cdmI further converts verruculide C into verruculide B. The terpene cyclase cdmG then produced the pentacyclic molecule 3-hydroxypentacecilide A, the backbone structure of chrodrimanin B, via folding the farnesyl moiety of the substrate into the chair-boat conformation. The short-chain dehydrogenase/reductase cdmF functions as the 3-OH dehydrogenase that oxidizes the C-3 hydroxyl group of 3-hydroxypentacecilide A and produces chrodrimanin C, the dehydrogenated product of 3-hydroxypentacecilide A. The cytochrome P450 monooxygenase cdmJ then accepts both 3-hydroxypentacecilide A and chrodrimanin C and functions as a C-7-beta-hydroxylase to produce respectively chrodrimanin H and chrodrimanin F. The dioxygenase cdmA accepts chrodrimanin H to afford chrodrimanin E, which is further transformed to chrodrimanin A by the dioxygenase cdmD. CdmA can also accept chrodrimanin C as substrate to convert it into verruculide A, which is further converted into chrodrimanin T by cdmD. The last step of the biosynthesis is proposed to be performed by the acetyltransferase cdmC which acetylates chrodrimanin A to yield chrodrimanin B. The pathway may also lead to the production of additional shunt products, including chrodrimanins T and U. The polypeptide is FAD-dependent monooxygenase cdmI (Talaromyces verruculosus (Penicillium verruculosum)).